The sequence spans 340 residues: Anthranilate phosphoribosyltransferase (340 aa).

Residues G81, 84 to 85 (GD), T89, 91 to 94 (NIST), 109 to 117 (KHGNRGATS), and S121 contribute to the 5-phospho-alpha-D-ribose 1-diphosphate site. G81 contacts anthranilate. A Mg(2+)-binding site is contributed by S93. Position 112 (N112) interacts with anthranilate. Position 167 (R167) interacts with anthranilate. Residues D225 and E226 each coordinate Mg(2+).

It belongs to the anthranilate phosphoribosyltransferase family. Homodimer. It depends on Mg(2+) as a cofactor.

The enzyme catalyses N-(5-phospho-beta-D-ribosyl)anthranilate + diphosphate = 5-phospho-alpha-D-ribose 1-diphosphate + anthranilate. Its pathway is amino-acid biosynthesis; L-tryptophan biosynthesis; L-tryptophan from chorismate: step 2/5. In terms of biological role, catalyzes the transfer of the phosphoribosyl group of 5-phosphorylribose-1-pyrophosphate (PRPP) to anthranilate to yield N-(5'-phosphoribosyl)-anthranilate (PRA). The protein is Anthranilate phosphoribosyltransferase of Methanocorpusculum labreanum (strain ATCC 43576 / DSM 4855 / Z).